A 103-amino-acid polypeptide reads, in one-letter code: Integration host factor subunit alpha (103 aa).

The tract at residues 51 to 73 is disordered; that stretch reads FGNFQLRDKPQRPGRNPKTGEEI.

Belongs to the bacterial histone-like protein family. Heterodimer of an alpha and a beta chain.

This protein is one of the two subunits of integration host factor, a specific DNA-binding protein that functions in genetic recombination as well as in transcriptional and translational control. This Azoarcus sp. (strain BH72) protein is Integration host factor subunit alpha.